A 68-amino-acid polypeptide reads, in one-letter code: Beta-toxin Im-2 (68 aa).

Residues 1–67 form the LCN-type CS-alpha/beta domain; the sequence is KDGYPMVRAG…VWTYEKNTCK (67 aa). Cystine bridges form between Cys-15/Cys-66, Cys-19/Cys-40, Cys-26/Cys-47, and Cys-30/Cys-49.

The protein belongs to the long (4 C-C) scorpion toxin superfamily. Sodium channel inhibitor family. Beta subfamily. As to expression, expressed by the venom gland.

The protein localises to the secreted. In terms of biological role, beta toxins bind voltage-independently at site-4 of sodium channels (Nav) and shift the voltage of activation toward more negative potentials thereby affecting sodium channel activation and promoting spontaneous and repetitive firing. Is toxic to both insect and mammals. Induces paralysis in Acheta domestica crickets, but does not induce death, whereas intracerebroventricular injection into mice causes immediate death (at a dose of 0.05 ug/g). The chain is Beta-toxin Im-2 from Isometrus maculatus (Lesser brown scorpion).